Here is a 347-residue protein sequence, read N- to C-terminus: Lipoyl synthase (347 aa).

Positions 77, 82, 88, 103, 107, 110, and 317 each coordinate [4Fe-4S] cluster. Positions 89–306 constitute a Radical SAM core domain; sequence FADGTATFMI…MDYGKKIGFF (218 aa).

It belongs to the radical SAM superfamily. Lipoyl synthase family. The cofactor is [4Fe-4S] cluster.

The protein resides in the cytoplasm. The enzyme catalyses [[Fe-S] cluster scaffold protein carrying a second [4Fe-4S](2+) cluster] + N(6)-octanoyl-L-lysyl-[protein] + 2 oxidized [2Fe-2S]-[ferredoxin] + 2 S-adenosyl-L-methionine + 4 H(+) = [[Fe-S] cluster scaffold protein] + N(6)-[(R)-dihydrolipoyl]-L-lysyl-[protein] + 4 Fe(3+) + 2 hydrogen sulfide + 2 5'-deoxyadenosine + 2 L-methionine + 2 reduced [2Fe-2S]-[ferredoxin]. Its pathway is protein modification; protein lipoylation via endogenous pathway; protein N(6)-(lipoyl)lysine from octanoyl-[acyl-carrier-protein]: step 2/2. Functionally, catalyzes the radical-mediated insertion of two sulfur atoms into the C-6 and C-8 positions of the octanoyl moiety bound to the lipoyl domains of lipoate-dependent enzymes, thereby converting the octanoylated domains into lipoylated derivatives. In Psychrobacter cryohalolentis (strain ATCC BAA-1226 / DSM 17306 / VKM B-2378 / K5), this protein is Lipoyl synthase.